The primary structure comprises 63 residues: Large ribosomal subunit protein bL28c (63 aa).

It belongs to the bacterial ribosomal protein bL28 family.

It localises to the plastid. The protein resides in the chloroplast. This is Large ribosomal subunit protein bL28c from Pyropia yezoensis (Susabi-nori).